Consider the following 461-residue polypeptide: Ornithine decarboxylase (461 aa).

Lysine 69 bears the N6-(pyridoxal phosphate)lysine mark. Pyridoxal 5'-phosphate contacts are provided by residues serine 200, glycine 237, and 274-277; that span reads EPGR. Serine 303 carries the phosphoserine; by CK2 modification. 331–332 provides a ligand contact to substrate; that stretch reads YD. Catalysis depends on cysteine 360, which acts as the Proton donor; shared with dimeric partner. Cysteine 360 carries the post-translational modification S-nitrosocysteine. Aspartate 361 lines the substrate pocket. Residue tyrosine 389 participates in pyridoxal 5'-phosphate binding.

It belongs to the Orn/Lys/Arg decarboxylase class-II family. Homodimer. Only the dimer is catalytically active, as the active sites are constructed of residues from both monomers. Pyridoxal 5'-phosphate serves as cofactor.

It carries out the reaction L-ornithine + H(+) = putrescine + CO2. It functions in the pathway amine and polyamine biosynthesis; putrescine biosynthesis via L-ornithine pathway; putrescine from L-ornithine: step 1/1. Its activity is regulated as follows. Inhibited by antizymes (AZs) OAZ1, OAZ2 and OAZ3 in response to polyamine levels. AZs inhibit the assembly of the functional homodimer by binding to ODC monomers. Additionally, OAZ1 targets ODC monomers for ubiquitin-independent proteolytic destruction by the 26S proteasome. In terms of biological role, catalyzes the first and rate-limiting step of polyamine biosynthesis that converts ornithine into putrescine, which is the precursor for the polyamines, spermidine and spermine. Polyamines are essential for cell proliferation and are implicated in cellular processes, ranging from DNA replication to apoptosis. This chain is Ornithine decarboxylase (Odc1), found in Mus pahari (Gairdner's shrew-mouse).